The chain runs to 766 residues: LPS-assembly protein LptD (766 aa).

The signal sequence occupies residues 1-18 (MNIRYLLLLSLMPHLVWA).

The protein belongs to the LptD family. Component of the lipopolysaccharide transport and assembly complex. Interacts with LptE and LptA.

It localises to the cell outer membrane. Functionally, together with LptE, is involved in the assembly of lipopolysaccharide (LPS) at the surface of the outer membrane. This Shewanella denitrificans (strain OS217 / ATCC BAA-1090 / DSM 15013) protein is LPS-assembly protein LptD.